Consider the following 323-residue polypeptide: Sodium/potassium-transporting ATPase subunit beta-2 (323 aa).

Residues 1-50 are Cytoplasmic-facing; it reads MPTITEDCIDGFQQYYSRPPERPKKKSLKQMVYDSEDNSYFGRSMDSWAK. The chain crosses the membrane as a helical; Signal-anchor for type II membrane protein span at residues 51 to 71; sequence IGIFYVAFYGVLAALVAICMW. Residues 72–323 are Extracellular-facing; that stretch reads AFFQTLDPRI…GSVHYELLID (252 aa). 2 cysteine pairs are disulfide-bonded: C153-C165 and C175-C189. Residues N180 and N206 are each glycosylated (N-linked (GlcNAc...) asparagine). A disulfide bridge connects residues C241 and C298.

The protein belongs to the X(+)/potassium ATPases subunit beta family. The sodium/potassium-transporting ATPase is composed of a catalytic alpha subunit, an auxiliary non-catalytic beta subunit and an additional regulatory subunit. In embryos, it is expressed in the neurons of the CNS and PNS, in Garland cells and posterior spiracles. In adults, it shows a nervous system specific distribution: optic lobes, brain, thoracic ganglia and axonal pathways in the leg. Both isoforms concentrate in the adult head, isoform 2.2 being predominant. Both isoforms are weakly expressed in the thorax and very poorly expressed in the abdomen.

The protein resides in the cell membrane. Its function is as follows. This is the non-catalytic component of the active enzyme, which catalyzes the hydrolysis of ATP coupled with the exchange of Na(+) and K(+) ions across the plasma membrane. The beta subunit regulates, through assembly of alpha/beta heterodimers, the number of sodium pumps transported to the plasma membrane. The chain is Sodium/potassium-transporting ATPase subunit beta-2 (nrv2) from Drosophila melanogaster (Fruit fly).